Reading from the N-terminus, the 970-residue chain is Vacuolar membrane protease (970 aa).

Over residues 1–12 (MTTADSNSSATR) the composition is skewed to polar residues. The interval 1-35 (MTTADSNSSATRGSHEMADGSNRVPNDEPYHRKSP) is disordered. Residues 1–56 (MTTADSNSSATRGSHEMADGSNRVPNDEPYHRKSPESCENANFFVRAMRASFGYRK) are Cytoplasmic-facing. Residues 25 to 35 (PNDEPYHRKSP) are compositionally biased toward basic and acidic residues. Residues 57-77 (TSLTILVFLSVIATVLLSYYD) form a helical membrane-spanning segment. At 78 to 397 (SSLEFSVSLP…FVVPMTFVFG (320 aa)) the chain is on the vacuolar side. N-linked (GlcNAc...) asparagine glycosylation is found at Asn146 and Asn173. Positions 187 and 199 each coordinate Zn(2+). Glu234 acts as the Proton acceptor in catalysis. Zn(2+)-binding residues include Glu235, Glu260, and His333. Residues 398 to 418 (VNVLLMVLVPLVSLISLALIF) traverse the membrane as a helical segment. The Cytoplasmic portion of the chain corresponds to 419 to 423 (AHRKW). A helical membrane pass occupies residues 424–444 (SVSLVTFFKFPLSFILSIFLL). The Vacuolar portion of the chain corresponds to 445 to 465 (DNFSSWFVVSVNNFLPNSSAG). 2 N-linked (GlcNAc...) asparagine glycosylation sites follow: Asn446 and Asn461. Residues 466-486 (IIALTYFSFFVLANYLLLNGI) traverse the membrane as a helical segment. The Cytoplasmic portion of the chain corresponds to 487–502 (NLLFWKFKGTRHDEKL). The chain crosses the membrane as a helical span at residues 503 to 523 (VVILQISFMFWVSLIWSTANI). The Vacuolar portion of the chain corresponds to 524-535 (AKSQFNGEHSGE). Residues 536 to 556 (FLLTLLYILQAAGGVFGLLCW) form a helical membrane-spanning segment. Residues 557-620 (LFKRSRTVHT…PTKHYSYDWS (64 aa)) lie on the Cytoplasmic side of the membrane. Residues 621-641 (IQFLFIVPISSFLSYNYGWLI) form a helical membrane-spanning segment. At 642 to 658 (LEGLKKTLQESATSEYL) the chain is on the vacuolar side. Residues 659-679 (VFRALKLLAVVVAVPYLPFIF) form a helical membrane-spanning segment. Residues 680–683 (KVNR) lie on the Cytoplasmic side of the membrane. A helical transmembrane segment spans residues 684–704 (IVFLVTIFLFVYGLGAIVISE). The Vacuolar segment spans residues 705–970 (PFTEANPLKL…LVNVKKSVLV (266 aa)). N-linked (GlcNAc...) asparagine glycans are attached at residues Asn738, Asn797, and Asn877.

Belongs to the peptidase M28 family. Zn(2+) serves as cofactor.

It localises to the vacuole membrane. In terms of biological role, may be involved in vacuolar sorting and osmoregulation. This Meyerozyma guilliermondii (strain ATCC 6260 / CBS 566 / DSM 6381 / JCM 1539 / NBRC 10279 / NRRL Y-324) (Yeast) protein is Vacuolar membrane protease.